The chain runs to 313 residues: Porphobilinogen deaminase (313 aa).

Cys241 carries the S-(dipyrrolylmethanemethyl)cysteine modification.

This sequence belongs to the HMBS family. Monomer. Dipyrromethane is required as a cofactor.

The enzyme catalyses 4 porphobilinogen + H2O = hydroxymethylbilane + 4 NH4(+). The protein operates within porphyrin-containing compound metabolism; protoporphyrin-IX biosynthesis; coproporphyrinogen-III from 5-aminolevulinate: step 2/4. In terms of biological role, tetrapolymerization of the monopyrrole PBG into the hydroxymethylbilane pre-uroporphyrinogen in several discrete steps. This chain is Porphobilinogen deaminase, found in Sulfurimonas denitrificans (strain ATCC 33889 / DSM 1251) (Thiomicrospira denitrificans (strain ATCC 33889 / DSM 1251)).